The primary structure comprises 627 residues: (+)-sabinene synthase, chloroplastic (627 aa).

A chloroplast-targeting transit peptide spans 1–46 (MSVISIVPLASNSCLYKSLMSSTHELKALCRPIATLGMCRRGKSVM). Positions 378, 382, and 530 each coordinate Mg(2+). A DDXXD motif motif is present at residues 378-382 (DDIYD).

The protein belongs to the terpene synthase family. Tpsd subfamily. As to quaternary structure, monomer. Requires Mg(2+) as cofactor.

It is found in the plastid. The protein localises to the chloroplast. The catalysed reaction is (2E)-geranyl diphosphate = (1R,5R)-sabinene + diphosphate. It participates in terpene metabolism; oleoresin biosynthesis. Functionally, terpene synthase (TPS) involved in defensive oleoresin formation in conifers in response to insect attack (e.g. white pine weevil P.strobi) or other injury. Produces (+)-sabinene from geranyl diphosphate, but has no activity with geranylgeranyl diphosphate or farnesyl diphosphate. The chain is (+)-sabinene synthase, chloroplastic (TPS-sab) from Picea sitchensis (Sitka spruce).